The primary structure comprises 293 residues: Nucleotide-binding protein Bcer98_3698 (293 aa).

14 to 21 contacts ATP; sequence GMSGAGKT. Residue 65-68 participates in GTP binding; that stretch reads DLRG.

Belongs to the RapZ-like family.

Displays ATPase and GTPase activities. This Bacillus cytotoxicus (strain DSM 22905 / CIP 110041 / 391-98 / NVH 391-98) protein is Nucleotide-binding protein Bcer98_3698.